The chain runs to 193 residues: Acyl carrier protein phosphodiesterase (193 aa).

This sequence belongs to the AcpH family.

The enzyme catalyses holo-[ACP] + H2O = apo-[ACP] + (R)-4'-phosphopantetheine + H(+). Its function is as follows. Converts holo-ACP to apo-ACP by hydrolytic cleavage of the phosphopantetheine prosthetic group from ACP. This Klebsiella pneumoniae subsp. pneumoniae (strain ATCC 700721 / MGH 78578) protein is Acyl carrier protein phosphodiesterase.